A 339-amino-acid polypeptide reads, in one-letter code: tRNA N6-adenosine threonylcarbamoyltransferase (339 aa).

The Fe cation site is built by His-115 and His-119. Substrate contacts are provided by residues 136-140 (LISGG), Asp-168, Glu-185, and Ser-265. Asp-293 is a binding site for Fe cation.

This sequence belongs to the KAE1 / TsaD family. Fe(2+) is required as a cofactor.

Its subcellular location is the cytoplasm. The enzyme catalyses L-threonylcarbamoyladenylate + adenosine(37) in tRNA = N(6)-L-threonylcarbamoyladenosine(37) in tRNA + AMP + H(+). Its function is as follows. Required for the formation of a threonylcarbamoyl group on adenosine at position 37 (t(6)A37) in tRNAs that read codons beginning with adenine. Is probably involved in the transfer of the threonylcarbamoyl moiety of threonylcarbamoyl-AMP (TC-AMP) to the N6 group of A37. The protein is tRNA N6-adenosine threonylcarbamoyltransferase of Pyrobaculum calidifontis (strain DSM 21063 / JCM 11548 / VA1).